The chain runs to 247 residues: Sugar fermentation stimulation protein homolog (247 aa).

The protein belongs to the SfsA family.

The chain is Sugar fermentation stimulation protein homolog from Aeromonas hydrophila subsp. hydrophila (strain ATCC 7966 / DSM 30187 / BCRC 13018 / CCUG 14551 / JCM 1027 / KCTC 2358 / NCIMB 9240 / NCTC 8049).